A 294-amino-acid polypeptide reads, in one-letter code: Putative glutamine amidotransferase HI_1037 (294 aa).

The active site involves C18. The 249-residue stretch at 18–266 (CQLLGMNCNT…NGGFVFFKNG (249 aa)) folds into the Glutamine amidotransferase type-2 domain.

This is Putative glutamine amidotransferase HI_1037 from Haemophilus influenzae (strain ATCC 51907 / DSM 11121 / KW20 / Rd).